The sequence spans 431 residues: Hydroxylamine reductase (431 aa).

[4Fe-4S] cluster is bound by residues Cys-5, Cys-8, Cys-17, and Cys-23. His-131, Glu-155, Cys-199, Cys-286, Cys-314, Cys-339, Glu-373, and Lys-375 together coordinate hybrid [4Fe-2O-2S] cluster. Position 286 is a cysteine persulfide (Cys-286).

It belongs to the HCP family. It depends on [4Fe-4S] cluster as a cofactor. Hybrid [4Fe-2O-2S] cluster is required as a cofactor.

The protein localises to the cytoplasm. It carries out the reaction A + NH4(+) + H2O = hydroxylamine + AH2 + H(+). Its function is as follows. Catalyzes the reduction of hydroxylamine to form NH(3) and H(2)O. The polypeptide is Hydroxylamine reductase (Thermotoga maritima (strain ATCC 43589 / DSM 3109 / JCM 10099 / NBRC 100826 / MSB8)).